The sequence spans 218 residues: MFTWTIYVSLLLVLAGTFLMNRNTNTDIIDTFKREVDLPIPAQPGPPFPLVTDYCDIVCGFGRGSAELGIPTANVPINQLPKGINDLDLGVYFGFAHIKTVDGQELSVETRRDGRTVVYNYGQYLSEANDDLSVLPMVLSVGKNPFYGNDFKTMELHIIHDFKNDFYGARVKFNILGHIRPELNYTTKEALIEDINIDIRTAQTVLATPPYQVFKQQL.

Residues 1–19 (MFTWTIYVSLLLVLAGTFL) form the signal peptide. The Mg(2+) site is built by threonine 72 and asparagine 74. The Nucleophile role is filled by glutamate 155.

Belongs to the flavokinase family. Requires Zn(2+) as cofactor. The cofactor is Mg(2+).

The protein localises to the microsome. The protein resides in the mitochondrion inner membrane. It localises to the endoplasmic reticulum. It catalyses the reaction riboflavin + ATP = FMN + ADP + H(+). It functions in the pathway cofactor biosynthesis; FMN biosynthesis; FMN from riboflavin (ATP route): step 1/1. In terms of biological role, catalyzes the phosphorylation of riboflavin (vitamin B2) to form flavin mononucleotide (FMN) coenzyme. This Saccharomyces cerevisiae (strain ATCC 204508 / S288c) (Baker's yeast) protein is Riboflavin kinase (FMN1).